A 172-amino-acid chain; its full sequence is Adenine phosphoribosyltransferase (172 aa).

This sequence belongs to the purine/pyrimidine phosphoribosyltransferase family. Homodimer.

Its subcellular location is the cytoplasm. It catalyses the reaction AMP + diphosphate = 5-phospho-alpha-D-ribose 1-diphosphate + adenine. The protein operates within purine metabolism; AMP biosynthesis via salvage pathway; AMP from adenine: step 1/1. In terms of biological role, catalyzes a salvage reaction resulting in the formation of AMP, that is energically less costly than de novo synthesis. This is Adenine phosphoribosyltransferase from Staphylococcus carnosus (strain TM300).